Here is a 143-residue protein sequence, read N- to C-terminus: MRVEAVVEVRLTEDKKKVLKALENVFTPVNIREEPSDVGVVLISTCDGHKCLEKLRGAIWRQGIQDAARSVISKGVVGEDTVIFSINKQAAYVGVVSFVTEPGESPLGPITFTVKTSNVRQFIDWLAPRTYRGKVYYEAPPPD.

The protein belongs to the UPF0201 family.

The chain is UPF0201 protein Pcal_0593 from Pyrobaculum calidifontis (strain DSM 21063 / JCM 11548 / VA1).